A 579-amino-acid polypeptide reads, in one-letter code: V-type ATP synthase alpha chain (579 aa).

238-245 (GPFGAGKT) is a binding site for ATP.

This sequence belongs to the ATPase alpha/beta chains family.

It catalyses the reaction ATP + H2O + 4 H(+)(in) = ADP + phosphate + 5 H(+)(out). Produces ATP from ADP in the presence of a proton gradient across the membrane. The V-type alpha chain is a catalytic subunit. This chain is V-type ATP synthase alpha chain, found in Borrelia hermsii (strain HS1 / DAH).